A 141-amino-acid chain; its full sequence is Nucleoside diphosphate kinase (141 aa).

ATP is bound by residues Lys-11, Phe-59, Arg-87, Thr-93, Arg-104, and Asn-114. The Pros-phosphohistidine intermediate role is filled by His-117.

Belongs to the NDK family. In terms of assembly, homotetramer. Mg(2+) serves as cofactor.

The protein resides in the cytoplasm. The catalysed reaction is a 2'-deoxyribonucleoside 5'-diphosphate + ATP = a 2'-deoxyribonucleoside 5'-triphosphate + ADP. It catalyses the reaction a ribonucleoside 5'-diphosphate + ATP = a ribonucleoside 5'-triphosphate + ADP. In terms of biological role, major role in the synthesis of nucleoside triphosphates other than ATP. The ATP gamma phosphate is transferred to the NDP beta phosphate via a ping-pong mechanism, using a phosphorylated active-site intermediate. This chain is Nucleoside diphosphate kinase, found in Alkalilimnicola ehrlichii (strain ATCC BAA-1101 / DSM 17681 / MLHE-1).